Here is a 411-residue protein sequence, read N- to C-terminus: cAMP-dependent protein kinase regulatory subunit (411 aa).

The interval 1–144 is disordered; the sequence is MAESAFPSAQ…SWTPPYHEKT (144 aa). The tract at residues 23-159 is dimerization and phosphorylation; the sequence is AAFQKISEED…RLKTAVSSNF (137 aa). Residues 46–58 are compositionally biased toward low complexity; it reads SANAAAASSSTGS. The span at 85-96 shows a compositional bias: acidic residues; sequence EEDEEGADEFPP. The segment covering 119–136 has biased composition (polar residues); the sequence is TSVSAESLNPTSAGSDSW. The residue at position 120 (S120) is a Phosphoserine. 3',5'-cyclic AMP contacts are provided by residues 160–289, E238, R247, 292–411, E359, and R368; these read LFSH…FLEE and LLSS…PVPA.

The protein belongs to the cAMP-dependent kinase regulatory chain family. As to quaternary structure, tetramer, composed of 2 regulatory (R) and 2 catalytic (C) subunits. In the presence of cAMP it dissociates into 2 active monomeric C subunits and an R dimer.

This Aspergillus niger protein is cAMP-dependent protein kinase regulatory subunit (pkaR).